Reading from the N-terminus, the 53-residue chain is ATP synthase protein 8 (53 aa).

The chain crosses the membrane as a helical span at residues 6-26; that stretch reads PIGWLSLFIIFSLTFILFSMM.

Belongs to the ATPase protein 8 family. In terms of assembly, F-type ATPases have 2 components, CF(1) - the catalytic core - and CF(0) - the membrane proton channel.

The protein resides in the mitochondrion membrane. In terms of biological role, mitochondrial membrane ATP synthase (F(1)F(0) ATP synthase or Complex V) produces ATP from ADP in the presence of a proton gradient across the membrane which is generated by electron transport complexes of the respiratory chain. F-type ATPases consist of two structural domains, F(1) - containing the extramembraneous catalytic core and F(0) - containing the membrane proton channel, linked together by a central stalk and a peripheral stalk. During catalysis, ATP synthesis in the catalytic domain of F(1) is coupled via a rotary mechanism of the central stalk subunits to proton translocation. Part of the complex F(0) domain. Minor subunit located with subunit a in the membrane. This chain is ATP synthase protein 8 (mt:ATPase8), found in Ceratitis capitata (Mediterranean fruit fly).